The primary structure comprises 529 residues: Probable cytochrome P450 6t1 (529 aa).

A heme-binding site is contributed by Cys-472.

It belongs to the cytochrome P450 family. Requires heme as cofactor.

Its subcellular location is the endoplasmic reticulum membrane. It localises to the microsome membrane. Its function is as follows. May be involved in the metabolism of insect hormones and in the breakdown of synthetic insecticides. The sequence is that of Probable cytochrome P450 6t1 (Cyp6t1) from Drosophila melanogaster (Fruit fly).